A 745-amino-acid polypeptide reads, in one-letter code: Elongation factor G, mitochondrial (745 aa).

The 278-residue stretch at 40–317 folds into the tr-type G domain; that stretch reads ERIRNIGISA…AVLDYLPNPG (278 aa). GTP-binding positions include 49–56, 116–120, and 170–173; these read AHIDSGKT, DTPGH, and NKLD.

Belongs to the TRAFAC class translation factor GTPase superfamily. Classic translation factor GTPase family. EF-G/EF-2 subfamily.

The protein resides in the mitochondrion. The protein operates within protein biosynthesis; polypeptide chain elongation. In terms of biological role, mitochondrial GTPase that catalyzes the GTP-dependent ribosomal translocation step during translation elongation. During this step, the ribosome changes from the pre-translocational (PRE) to the post-translocational (POST) state as the newly formed A-site-bound peptidyl-tRNA and P-site-bound deacylated tRNA move to the P and E sites, respectively. Catalyzes the coordinated movement of the two tRNA molecules, the mRNA and conformational changes in the ribosome. Essential during development as it acts as a retrograde signal from mitochondria to the nucleus to slow down cell proliferation if mitochondrial energy output is low. This Drosophila sechellia (Fruit fly) protein is Elongation factor G, mitochondrial.